The primary structure comprises 355 residues: Green-sensitive opsin (355 aa).

Over 1–36 (MNGTEGINFYVPMSNKTGVVRSPFEYPQYYLAEPWK) the chain is Extracellular. 2 N-linked (GlcNAc...) asparagine glycosylation sites follow: asparagine 2 and asparagine 15. A helical transmembrane segment spans residues 37–61 (YRLVCCYIFFLISTGLPINLLTLLV). At 62-73 (TFKHKKLRQPLN) the chain is on the cytoplasmic side. A helical membrane pass occupies residues 74 to 99 (YILVNLAVADLFMACFGFTVTFYTAW). The Extracellular portion of the chain corresponds to 100-113 (NGYFVFGPVGCAVE). A disulfide bond links cysteine 110 and cysteine 187. Residues 114-133 (GFFATLGGQVALWSLVVLAI) traverse the membrane as a helical segment. Over 134–152 (ERYIVVCKPMGNFRFSATH) the chain is Cytoplasmic. Residues 153-176 (AMMGIAFTWVMAFSCAAPPLFGWS) form a helical membrane-spanning segment. The Extracellular segment spans residues 177 to 202 (RYMPEGMQCSCGPDYYTHNPDYHNES). A helical transmembrane segment spans residues 203–230 (YVLYMFVIHFIIPVVVIFFSYGRLICKV). At 231 to 252 (REAAAQQQESATTQKAEKEVTR) the chain is on the cytoplasmic side. A helical transmembrane segment spans residues 253–276 (MVILMVLGFMLAWTPYAVVAFWIF). Over 277–284 (TNKGADFT) the chain is Extracellular. Residues 285–309 (ATLMAVPAFFSKSSSLYNPIIYVLM) traverse the membrane as a helical segment. The residue at position 296 (lysine 296) is an N6-(retinylidene)lysine. The Cytoplasmic portion of the chain corresponds to 310 to 355 (NKQFRNCMITTICCGKNPFGDEDVSSTVSQSKTEVSSVSSSQVSPA).

It belongs to the G-protein coupled receptor 1 family. Opsin subfamily. Phosphorylated on some or all of the serine and threonine residues present in the C-terminal region. In terms of tissue distribution, the color pigments are found in the cone photoreceptor cells.

The protein resides in the membrane. Functionally, visual pigments are the light-absorbing molecules that mediate vision. They consist of an apoprotein, opsin, covalently linked to cis-retinal. In Gallus gallus (Chicken), this protein is Green-sensitive opsin (PRA1).